Consider the following 626-residue polypeptide: Chaperone protein HtpG (626 aa).

Residues 1–331 (MSETVERHEF…TDDLPLNVSR (331 aa)) form an a; substrate-binding region. The b stretch occupies residues 332–544 (EMLQSTPTLQ…GMGPDLQMQR (213 aa)). The c stretch occupies residues 545 to 626 (LLRRAGRGFG…GTVAKPAESA (82 aa)).

It belongs to the heat shock protein 90 family. Homodimer.

The protein resides in the cytoplasm. Functionally, molecular chaperone. Has ATPase activity. This is Chaperone protein HtpG from Methylorubrum populi (strain ATCC BAA-705 / NCIMB 13946 / BJ001) (Methylobacterium populi).